The following is a 241-amino-acid chain: Geranylgeranylglyceryl phosphate synthase (241 aa).

Positions 26 and 52 each coordinate Mg(2+). Residues 172–178 (YFEAGSG), 204–205 (GG), and 226–227 (GT) each bind sn-glycerol 1-phosphate.

This sequence belongs to the GGGP/HepGP synthase family. Group II subfamily. The cofactor is Mg(2+).

The protein resides in the cytoplasm. It catalyses the reaction sn-glycerol 1-phosphate + (2E,6E,10E)-geranylgeranyl diphosphate = sn-3-O-(geranylgeranyl)glycerol 1-phosphate + diphosphate. It participates in membrane lipid metabolism; glycerophospholipid metabolism. Prenyltransferase that catalyzes the transfer of the geranylgeranyl moiety of geranylgeranyl diphosphate (GGPP) to the C3 hydroxyl of sn-glycerol-1-phosphate (G1P). This reaction is the first ether-bond-formation step in the biosynthesis of archaeal membrane lipids. This chain is Geranylgeranylglyceryl phosphate synthase, found in Hyperthermus butylicus (strain DSM 5456 / JCM 9403 / PLM1-5).